Reading from the N-terminus, the 159-residue chain is Phosphopantetheine adenylyltransferase (159 aa).

Thr-10 is a binding site for substrate. Residues 10 to 11 (TF) and His-18 contribute to the ATP site. Residues Lys-42, Leu-74, and Arg-88 each coordinate substrate. Residues 89 to 91 (GLR), Glu-99, and 124 to 130 (YSFISSS) each bind ATP.

The protein belongs to the bacterial CoaD family. Homohexamer. Mg(2+) is required as a cofactor.

The protein localises to the cytoplasm. The catalysed reaction is (R)-4'-phosphopantetheine + ATP + H(+) = 3'-dephospho-CoA + diphosphate. Its pathway is cofactor biosynthesis; coenzyme A biosynthesis; CoA from (R)-pantothenate: step 4/5. Its function is as follows. Reversibly transfers an adenylyl group from ATP to 4'-phosphopantetheine, yielding dephospho-CoA (dPCoA) and pyrophosphate. The polypeptide is Phosphopantetheine adenylyltransferase (Campylobacter hominis (strain ATCC BAA-381 / DSM 21671 / CCUG 45161 / LMG 19568 / NCTC 13146 / CH001A)).